Consider the following 370-residue polypeptide: 4-hydroxy-3-methylbut-2-en-1-yl diphosphate synthase (flavodoxin) (370 aa).

[4Fe-4S] cluster contacts are provided by Cys268, Cys271, Cys303, and Glu310.

This sequence belongs to the IspG family. The cofactor is [4Fe-4S] cluster.

It catalyses the reaction (2E)-4-hydroxy-3-methylbut-2-enyl diphosphate + oxidized [flavodoxin] + H2O + 2 H(+) = 2-C-methyl-D-erythritol 2,4-cyclic diphosphate + reduced [flavodoxin]. The protein operates within isoprenoid biosynthesis; isopentenyl diphosphate biosynthesis via DXP pathway; isopentenyl diphosphate from 1-deoxy-D-xylulose 5-phosphate: step 5/6. Functionally, converts 2C-methyl-D-erythritol 2,4-cyclodiphosphate (ME-2,4cPP) into 1-hydroxy-2-methyl-2-(E)-butenyl 4-diphosphate. This is 4-hydroxy-3-methylbut-2-en-1-yl diphosphate synthase (flavodoxin) from Bacillus pumilus (strain SAFR-032).